The primary structure comprises 122 residues: Large ribosomal subunit protein uL14 (122 aa).

The protein belongs to the universal ribosomal protein uL14 family. In terms of assembly, part of the 50S ribosomal subunit. Forms a cluster with proteins L3 and L19. In the 70S ribosome, L14 and L19 interact and together make contacts with the 16S rRNA in bridges B5 and B8.

Functionally, binds to 23S rRNA. Forms part of two intersubunit bridges in the 70S ribosome. The protein is Large ribosomal subunit protein uL14 of Phytoplasma mali (strain AT).